Reading from the N-terminus, the 248-residue chain is Putative insertion sequence ATP-binding protein y4uH (248 aa).

An ATP-binding site is contributed by 106–113; the sequence is GPTGIGKS.

It belongs to the IS21/IS1162 putative ATP-binding protein family.

The polypeptide is Putative insertion sequence ATP-binding protein y4uH (Sinorhizobium fredii (strain NBRC 101917 / NGR234)).